Here is a 439-residue protein sequence, read N- to C-terminus: Adenylosuccinate synthetase (439 aa).

GTP-binding positions include 25–31 (GDEGKGK), 53–55 (GHT), and lysine 62. Aspartate 26 (proton acceptor) is an active-site residue. Mg(2+)-binding residues include aspartate 26 and glycine 53. Residues 26–29 (DEGK) and 51–54 (NAGH) contribute to the IMP site. Residue histidine 54 is the Proton donor of the active site. IMP-binding residues include threonine 141, arginine 155, asparagine 232, and threonine 247. A GTP-binding site is contributed by threonine 307. 307–313 (TTTNRPR) contributes to the substrate binding site. Arginine 311 serves as a coordination point for IMP. GTP-binding positions include arginine 313, 339–341 (KLD), and 425–427 (GVG).

The protein belongs to the adenylosuccinate synthetase family. In terms of assembly, homodimer. It depends on Mg(2+) as a cofactor.

It is found in the cytoplasm. It carries out the reaction IMP + L-aspartate + GTP = N(6)-(1,2-dicarboxyethyl)-AMP + GDP + phosphate + 2 H(+). It functions in the pathway purine metabolism; AMP biosynthesis via de novo pathway; AMP from IMP: step 1/2. Functionally, plays an important role in the salvage pathway for purine nucleotide biosynthesis. Catalyzes the first commited step in the biosynthesis of AMP from IMP. This Plasmodium chabaudi chabaudi protein is Adenylosuccinate synthetase.